Here is a 104-residue protein sequence, read N- to C-terminus: MGKLTLLLLVLLGWLQYSLWLGKNGIHDYTRVDEDVASQQGNNAKLKARNDRLFAEIDDLNGGSEAIEERARNELGMIKPGETFYRLVPDQNRRNAQQGRPASQ.

Residues 1-3 (MGK) lie on the Cytoplasmic side of the membrane. A helical transmembrane segment spans residues 4 to 21 (LTLLLLVLLGWLQYSLWL). Residues 22 to 104 (GKNGIHDYTR…NAQQGRPASQ (83 aa)) lie on the Periplasmic side of the membrane. Residues 33-62 (DEDVASQQGNNAKLKARNDRLFAEIDDLNG) are a coiled coil.

The protein belongs to the FtsB family. As to quaternary structure, part of a complex composed of FtsB, FtsL and FtsQ.

It localises to the cell inner membrane. Functionally, essential cell division protein. May link together the upstream cell division proteins, which are predominantly cytoplasmic, with the downstream cell division proteins, which are predominantly periplasmic. The polypeptide is Cell division protein FtsB (Erwinia tasmaniensis (strain DSM 17950 / CFBP 7177 / CIP 109463 / NCPPB 4357 / Et1/99)).